A 1086-amino-acid chain; its full sequence is Receptor-type guanylate cyclase gcy-6 (1086 aa).

Residues 1–21 form the signal peptide; the sequence is MIGVYLRSVIFPLLFVIQTIC. Residues 22 to 487 are Extracellular-facing; sequence QPPGNVFHLG…PANVFFQYIG (466 aa). Residues Asn325, Asn343, Asn387, and Asn427 are each glycosylated (N-linked (GlcNAc...) asparagine). Residues 488–508 traverse the membrane as a helical segment; that stretch reads WFIAAIIIIFFTIMGAILAFI. Over 509–1086 the chain is Cytoplasmic; that stretch reads YLCHAKQQEV…APKILKKKQD (578 aa). Residues 560 to 836 form the Protein kinase domain; it reads SSTLSEVGET…NDNLMDHVFN (277 aa). ATP is bound by residues 566–574 and Lys589; that span reads VGETRNYLF. The Guanylate cyclase domain occupies 894–1024; sequence TLFFSDVVSF…DAVNTASRME (131 aa).

It belongs to the adenylyl cyclase class-4/guanylyl cyclase family. In terms of tissue distribution, expressed in both ASEL and ASER neurons throughout late embryonic and early larval stages. In adults, expressed asymmetrically in ASE left (ASEL) sensory neuron.

Its subcellular location is the cell membrane. It catalyses the reaction GTP = 3',5'-cyclic GMP + diphosphate. Functionally, guanylate cyclase involved in the production of the second messenger cGMP. Regulates chemotaxis responses toward the salt ion Mg(2+) and to a lesser extent toward Cl(1-) in ASE left (ASEL) sensory neuron. The polypeptide is Receptor-type guanylate cyclase gcy-6 (Caenorhabditis elegans).